The sequence spans 371 residues: Queuine tRNA-ribosyltransferase (371 aa).

The Proton acceptor role is filled by Asp-89. Substrate-binding positions include 89 to 93 (DSGGF), Asp-143, Gln-185, and Gly-212. Positions 243 to 249 (GVGTPED) are RNA binding. Catalysis depends on Asp-262, which acts as the Nucleophile. Residues 267–271 (TRNAR) are RNA binding; important for wobble base 34 recognition. Cys-300, Cys-302, Cys-305, and His-331 together coordinate Zn(2+).

This sequence belongs to the queuine tRNA-ribosyltransferase family. In terms of assembly, homodimer. Within each dimer, one monomer is responsible for RNA recognition and catalysis, while the other monomer binds to the replacement base PreQ1. Zn(2+) serves as cofactor.

The catalysed reaction is 7-aminomethyl-7-carbaguanine + guanosine(34) in tRNA = 7-aminomethyl-7-carbaguanosine(34) in tRNA + guanine. The protein operates within tRNA modification; tRNA-queuosine biosynthesis. Catalyzes the base-exchange of a guanine (G) residue with the queuine precursor 7-aminomethyl-7-deazaguanine (PreQ1) at position 34 (anticodon wobble position) in tRNAs with GU(N) anticodons (tRNA-Asp, -Asn, -His and -Tyr). Catalysis occurs through a double-displacement mechanism. The nucleophile active site attacks the C1' of nucleotide 34 to detach the guanine base from the RNA, forming a covalent enzyme-RNA intermediate. The proton acceptor active site deprotonates the incoming PreQ1, allowing a nucleophilic attack on the C1' of the ribose to form the product. After dissociation, two additional enzymatic reactions on the tRNA convert PreQ1 to queuine (Q), resulting in the hypermodified nucleoside queuosine (7-(((4,5-cis-dihydroxy-2-cyclopenten-1-yl)amino)methyl)-7-deazaguanosine). In Nitrosomonas europaea (strain ATCC 19718 / CIP 103999 / KCTC 2705 / NBRC 14298), this protein is Queuine tRNA-ribosyltransferase.